The chain runs to 824 residues: Leucine--tRNA ligase (824 aa).

The short motif at 41-51 (PYPSGTLHVGH) is the 'HIGH' region element. A 'KMSKS' region motif is present at residues 580–584 (KMSKS). K583 contributes to the ATP binding site.

It belongs to the class-I aminoacyl-tRNA synthetase family.

The protein localises to the cytoplasm. It carries out the reaction tRNA(Leu) + L-leucine + ATP = L-leucyl-tRNA(Leu) + AMP + diphosphate. This is Leucine--tRNA ligase from Thermotoga maritima (strain ATCC 43589 / DSM 3109 / JCM 10099 / NBRC 100826 / MSB8).